A 41-amino-acid chain; its full sequence is Large ribosomal subunit protein bL36 (41 aa).

This sequence belongs to the bacterial ribosomal protein bL36 family.

In Edwardsiella ictaluri (strain 93-146), this protein is Large ribosomal subunit protein bL36.